The following is a 238-amino-acid chain: Probable transcriptional regulatory protein YeeN (238 aa).

It belongs to the TACO1 family. YeeN subfamily.

It is found in the cytoplasm. In Salmonella choleraesuis (strain SC-B67), this protein is Probable transcriptional regulatory protein YeeN.